Here is a 99-residue protein sequence, read N- to C-terminus: MKIARVCGTVTSTQKEDTLTGVKFLVLQYLGEDGEFLPDYEVAADTVGAGQDEWVLVSRGSAARHIINGTDKPIDAAVVAIIDTVSRDNYLLYSKRTQY.

In terms of domain architecture, BMV spans 1–83 (MKIARVCGTV…IDAAVVAIID (83 aa)).

This sequence belongs to the CcmL/EutN family. CcmL subfamily. Homopentamer. May interact with CcmK2, this occurs at very high CcmK2 concentrations. Interacts with full-length CcmM.

It is found in the carboxysome. Probably forms vertices in the carboxysome, a polyhedral inclusion where RuBisCO (ribulose bisphosphate carboxylase, rbcL-rbcS) is sequestered. Has been modeled to induce curvature upon insertion into an otherwise flat hexagonal molecular layer of CcmK subunits. This Thermosynechococcus vestitus (strain NIES-2133 / IAM M-273 / BP-1) protein is Carboxysome shell vertex protein CcmL.